A 133-amino-acid chain; its full sequence is ATP synthase epsilon chain, chloroplastic (133 aa).

The protein belongs to the ATPase epsilon chain family. As to quaternary structure, F-type ATPases have 2 components, CF(1) - the catalytic core - and CF(0) - the membrane proton channel. CF(1) has five subunits: alpha(3), beta(3), gamma(1), delta(1), epsilon(1). CF(0) has three main subunits: a, b and c.

The protein localises to the plastid. It localises to the chloroplast thylakoid membrane. In terms of biological role, produces ATP from ADP in the presence of a proton gradient across the membrane. The chain is ATP synthase epsilon chain, chloroplastic from Lactuca sativa (Garden lettuce).